Consider the following 139-residue polypeptide: Small ribosomal subunit protein uS12m (139 aa).

The transit peptide at 1–29 (MSWSGLLRGLSMSLNYGLALAPRPWGTRP) directs the protein to the mitochondrion. Residues 37–57 (HRRGPPKFPPSKPGPTEGRPQ) are disordered.

Belongs to the universal ribosomal protein uS12 family. As to quaternary structure, component of the mitochondrial ribosome small subunit (28S) which comprises a 12S rRNA and about 30 distinct proteins.

Its subcellular location is the mitochondrion. The polypeptide is Small ribosomal subunit protein uS12m (MRPS12) (Bos taurus (Bovine)).